Consider the following 610-residue polypeptide: Glutamine--fructose-6-phosphate aminotransferase [isomerizing] (610 aa).

Catalysis depends on cysteine 2, which acts as the Nucleophile; for GATase activity. Positions 2 to 220 constitute a Glutamine amidotransferase type-2 domain; that stretch reads CGIISAISKK…EGDIAILSHK (219 aa). 2 SIS domains span residues 289-429 and 461-600; these read AHAL…LKTN and LAKE…IDKP. The active-site For Fru-6P isomerization activity is the lysine 605.

As to quaternary structure, homodimer.

It is found in the cytoplasm. It carries out the reaction D-fructose 6-phosphate + L-glutamine = D-glucosamine 6-phosphate + L-glutamate. Its function is as follows. Catalyzes the first step in hexosamine metabolism, converting fructose-6P into glucosamine-6P using glutamine as a nitrogen source. This is Glutamine--fructose-6-phosphate aminotransferase [isomerizing] from Buchnera aphidicola subsp. Baizongia pistaciae (strain Bp).